Consider the following 212-residue polypeptide: Outer-membrane lipoprotein carrier protein (212 aa).

A signal peptide spans 1-29; sequence MSSARRRALGFSFQALLLCAAGWHGAAQA.

The protein belongs to the LolA family. Monomer.

Its subcellular location is the periplasm. Functionally, participates in the translocation of lipoproteins from the inner membrane to the outer membrane. Only forms a complex with a lipoprotein if the residue after the N-terminal Cys is not an aspartate (The Asp acts as a targeting signal to indicate that the lipoprotein should stay in the inner membrane). The polypeptide is Outer-membrane lipoprotein carrier protein (Leptothrix cholodnii (strain ATCC 51168 / LMG 8142 / SP-6) (Leptothrix discophora (strain SP-6))).